We begin with the raw amino-acid sequence, 442 residues long: Microfibrillar-associated protein 1 (442 aa).

Disordered stretches follow at residues 1-34 (MSAP…YGEG) and 113-203 (EVVS…PRLK). Acidic residues-rich tracts occupy residues 134-148 (DTSE…DEEI) and 181-198 (ESEL…EDEM).

The protein belongs to the MFAP1 family. As to quaternary structure, component of the spliceosome B complex. Interacts with PRPF38A (via N-terminal interaction domain). In terms of tissue distribution, widely expressed.

It is found in the nucleus. Its function is as follows. Involved in pre-mRNA splicing as a component of the spliceosome. The chain is Microfibrillar-associated protein 1 from Gallus gallus (Chicken).